We begin with the raw amino-acid sequence, 569 residues long: MASLQFSSQFLGSNTKTHSSIISISRSYSPTPFTRFSRKKYESCSMSMNGCDGDFKTPLGTVETRTMTAVLSPAAATERLISAVSELKSQPPSFSSGVVRLQVPIDQQIGAIDWLQAQNEIQPRCFFSRRSDVGRPDLLLDLANENGNGNGNGTVSSDRNLVSVAGIGSAVFFRDLDPFSHDDWRSIRRFLSSTSPLIRAYGGMRFDPNGKIAVEWEPFGAFYFSVPQVEFNEFGGSSMLAATIAWDDELSWTLENAIEALQETMLQVSSVVMKLRNRSLGVSVLSKNHVPTKGAYFPAVEKALEMINQKSSPLNKVVLARNSRIITDTDIDPIAWLAQLQREGHDAYQFCLQPPGAPAFIGNTPERLFQRTQLGVCSEALAATRPRAASSARDMEIERDLLTSPKDDLEFSIVRENIREKLNGICDRVVVKPQKTVRKLARVQHLYSQLAGRLTKEDDEYKILAALHPTPAVCGLPAEEARLLIKEIESFDRGMYAGPIGFFGGEESEFAVGIRSALVEKGLGALIYAGTGIVAGSDPSSEWNELDLKISQFTKSIEYEATTSLQAIN.

Residues 1–45 (MASLQFSSQFLGSNTKTHSSIISISRSYSPTPFTRFSRKKYESCS) constitute a chloroplast transit peptide.

Belongs to the isochorismate synthase family. As to quaternary structure, monomer. Requires Mg(2+) as cofactor. In terms of tissue distribution, leaves.

The protein resides in the plastid. It localises to the chloroplast. The catalysed reaction is chorismate = isochorismate. The protein operates within siderophore biosynthesis; salicylate biosynthesis. Isochorismate synthase involved in the synthesis of salicylic acid (SA) required for both local and systemic acquired resistance (LAR and SAR) while SA synthesized through the phenylalanine ammonium lyase (PAL) pathway seems to potentiate plant cell death. Also involved in phylloquinone (vitamin K1) synthesis. Has no isochorismate pyruvate lyase (IPL) activity. This Arabidopsis thaliana (Mouse-ear cress) protein is Isochorismate synthase 1, chloroplastic (ICS1).